Consider the following 397-residue polypeptide: Ribosomal RNA large subunit methyltransferase I (397 aa).

The PUA domain occupies 2–82 (TTSIYLVKGR…EVINVDFFVK (81 aa)).

Belongs to the methyltransferase superfamily. RlmI family.

The protein resides in the cytoplasm. The catalysed reaction is cytidine(1962) in 23S rRNA + S-adenosyl-L-methionine = 5-methylcytidine(1962) in 23S rRNA + S-adenosyl-L-homocysteine + H(+). Functionally, specifically methylates the cytosine at position 1962 (m5C1962) of 23S rRNA. The chain is Ribosomal RNA large subunit methyltransferase I from Photobacterium profundum (strain SS9).